We begin with the raw amino-acid sequence, 283 residues long: Nucleoid occlusion protein (283 aa).

Positions 148–167 form a DNA-binding region, H-T-H motif; that stretch reads EALAQRLGKGQSTIANKLRL.

Belongs to the ParB family.

The protein localises to the cytoplasm. Its subcellular location is the nucleoid. Functionally, effects nucleoid occlusion by binding relatively nonspecifically to DNA and preventing the assembly of the division machinery in the vicinity of the nucleoid, especially under conditions that disturb the cell cycle. It helps to coordinate cell division and chromosome segregation by preventing the formation of the Z ring through the nucleoid, which would cause chromosome breakage. In Bacillus licheniformis (strain ATCC 14580 / DSM 13 / JCM 2505 / CCUG 7422 / NBRC 12200 / NCIMB 9375 / NCTC 10341 / NRRL NRS-1264 / Gibson 46), this protein is Nucleoid occlusion protein.